The following is an 86-amino-acid chain: Small ribosomal subunit protein bS18 (86 aa).

Belongs to the bacterial ribosomal protein bS18 family. In terms of assembly, part of the 30S ribosomal subunit. Forms a tight heterodimer with protein bS6.

Binds as a heterodimer with protein bS6 to the central domain of the 16S rRNA, where it helps stabilize the platform of the 30S subunit. This Campylobacter jejuni subsp. jejuni serotype O:6 (strain 81116 / NCTC 11828) protein is Small ribosomal subunit protein bS18.